The sequence spans 199 residues: Superoxide dismutase [Mn/Fe] 2 (199 aa).

Residues His-27, His-81, Asp-161, and His-165 each contribute to the Fe(3+) site. Residues His-27, His-81, Asp-161, and His-165 each coordinate Mn(2+).

Belongs to the iron/manganese superoxide dismutase family. Homodimer. Can also form a heterodimer with SodA. It depends on Mn(2+) as a cofactor. Requires Fe(3+) as cofactor.

It catalyses the reaction 2 superoxide + 2 H(+) = H2O2 + O2. In terms of biological role, destroys superoxide anion radicals which are normally produced within the cells and which are toxic to biological systems. Catalyzes the dismutation of superoxide anion radicals into O2 and H2O2 by successive reduction and oxidation of the transition metal ion at the active site. The sequence is that of Superoxide dismutase [Mn/Fe] 2 (sodM) from Staphylococcus aureus (strain USA300).